Reading from the N-terminus, the 467-residue chain is Probable Xaa-Pro aminopeptidase SMAC_04549 (467 aa).

Residues aspartate 263, aspartate 274, glutamate 397, and glutamate 437 each coordinate Mn(2+).

This sequence belongs to the peptidase M24B family. Mn(2+) is required as a cofactor.

It catalyses the reaction Release of any N-terminal amino acid, including proline, that is linked to proline, even from a dipeptide or tripeptide.. Functionally, catalyzes the removal of a penultimate prolyl residue from the N-termini of peptides. This Sordaria macrospora (strain ATCC MYA-333 / DSM 997 / K(L3346) / K-hell) protein is Probable Xaa-Pro aminopeptidase SMAC_04549.